Reading from the N-terminus, the 178-residue chain is Large ribosomal subunit protein uL10 (178 aa).

Belongs to the universal ribosomal protein uL10 family. Part of the ribosomal stalk of the 50S ribosomal subunit. The N-terminus interacts with L11 and the large rRNA to form the base of the stalk. The C-terminus forms an elongated spine to which L12 dimers bind in a sequential fashion forming a multimeric L10(L12)X complex.

In terms of biological role, forms part of the ribosomal stalk, playing a central role in the interaction of the ribosome with GTP-bound translation factors. The polypeptide is Large ribosomal subunit protein uL10 (Thermosynechococcus vestitus (strain NIES-2133 / IAM M-273 / BP-1)).